A 310-amino-acid polypeptide reads, in one-letter code: Small ribosomal subunit protein uS2 (310 aa).

A compositionally biased stretch (basic and acidic residues) spans 249 to 272; sequence WERDLLEGEKAEKKDDAEAAEKPA. The disordered stretch occupies residues 249-310; the sequence is WERDLLEGEK…EAPAADAEQA (62 aa). A compositionally biased stretch (low complexity) spans 273-310; sequence EAPAAEAPAAEAAEAPAAEAAPAEEPAAEAPAADAEQA.

It belongs to the universal ribosomal protein uS2 family.

The polypeptide is Small ribosomal subunit protein uS2 (rpsB) (Streptomyces coelicolor (strain ATCC BAA-471 / A3(2) / M145)).